A 572-amino-acid chain; its full sequence is DNA mismatch repair protein MutL (572 aa).

The protein belongs to the DNA mismatch repair MutL/HexB family.

Functionally, this protein is involved in the repair of mismatches in DNA. It is required for dam-dependent methyl-directed DNA mismatch repair. May act as a 'molecular matchmaker', a protein that promotes the formation of a stable complex between two or more DNA-binding proteins in an ATP-dependent manner without itself being part of a final effector complex. This Dictyoglomus turgidum (strain DSM 6724 / Z-1310) protein is DNA mismatch repair protein MutL.